The sequence spans 94 residues: Pyrimidine/purine nucleoside phosphorylase (94 aa).

This sequence belongs to the nucleoside phosphorylase PpnP family.

The enzyme catalyses a purine D-ribonucleoside + phosphate = a purine nucleobase + alpha-D-ribose 1-phosphate. The catalysed reaction is adenosine + phosphate = alpha-D-ribose 1-phosphate + adenine. It catalyses the reaction cytidine + phosphate = cytosine + alpha-D-ribose 1-phosphate. It carries out the reaction guanosine + phosphate = alpha-D-ribose 1-phosphate + guanine. The enzyme catalyses inosine + phosphate = alpha-D-ribose 1-phosphate + hypoxanthine. The catalysed reaction is thymidine + phosphate = 2-deoxy-alpha-D-ribose 1-phosphate + thymine. It catalyses the reaction uridine + phosphate = alpha-D-ribose 1-phosphate + uracil. It carries out the reaction xanthosine + phosphate = alpha-D-ribose 1-phosphate + xanthine. Catalyzes the phosphorolysis of diverse nucleosides, yielding D-ribose 1-phosphate and the respective free bases. Can use uridine, adenosine, guanosine, cytidine, thymidine, inosine and xanthosine as substrates. Also catalyzes the reverse reactions. The protein is Pyrimidine/purine nucleoside phosphorylase of Saccharophagus degradans (strain 2-40 / ATCC 43961 / DSM 17024).